We begin with the raw amino-acid sequence, 314 residues long: Acetyl-coenzyme A carboxylase carboxyl transferase subunit beta (314 aa).

The 271-residue stretch at 37 to 307 folds into the CoA carboxyltransferase N-terminal domain; that stretch reads LWQKCPACDT…MSLPSIDSEA (271 aa). Positions 41, 44, 60, and 63 each coordinate Zn(2+). A C4-type zinc finger spans residues 41–63; it reads CPACDTLTYTKDLQQNWQVCPSC.

Belongs to the AccD/PCCB family. As to quaternary structure, acetyl-CoA carboxylase is a heterohexamer composed of biotin carboxyl carrier protein (AccB), biotin carboxylase (AccC) and two subunits each of ACCase subunit alpha (AccA) and ACCase subunit beta (AccD). Zn(2+) is required as a cofactor.

It localises to the cytoplasm. It carries out the reaction N(6)-carboxybiotinyl-L-lysyl-[protein] + acetyl-CoA = N(6)-biotinyl-L-lysyl-[protein] + malonyl-CoA. Its pathway is lipid metabolism; malonyl-CoA biosynthesis; malonyl-CoA from acetyl-CoA: step 1/1. Functionally, component of the acetyl coenzyme A carboxylase (ACC) complex. Biotin carboxylase (BC) catalyzes the carboxylation of biotin on its carrier protein (BCCP) and then the CO(2) group is transferred by the transcarboxylase to acetyl-CoA to form malonyl-CoA. The protein is Acetyl-coenzyme A carboxylase carboxyl transferase subunit beta of Synechococcus sp. (strain JA-2-3B'a(2-13)) (Cyanobacteria bacterium Yellowstone B-Prime).